The primary structure comprises 121 residues: NADH-quinone oxidoreductase subunit A 2 (121 aa).

3 helical membrane-spanning segments follow: residues 6-26 (FLPVLFMVTGIVLVAAATLFV), 60-80 (VPFFILAILLVVFDVEAMFLF), and 89-109 (IGFVGYIEMFVFMLLLLVGFA).

This sequence belongs to the complex I subunit 3 family. As to quaternary structure, NDH-1 is composed of 14 different subunits. Subunits NuoA, H, J, K, L, M, N constitute the membrane sector of the complex.

It localises to the cell inner membrane. It carries out the reaction a quinone + NADH + 5 H(+)(in) = a quinol + NAD(+) + 4 H(+)(out). In terms of biological role, NDH-1 shuttles electrons from NADH, via FMN and iron-sulfur (Fe-S) centers, to quinones in the respiratory chain. The immediate electron acceptor for the enzyme in this species is believed to be ubiquinone. Couples the redox reaction to proton translocation (for every two electrons transferred, four hydrogen ions are translocated across the cytoplasmic membrane), and thus conserves the redox energy in a proton gradient. The chain is NADH-quinone oxidoreductase subunit A 2 from Rhizobium meliloti (strain 1021) (Ensifer meliloti).